The chain runs to 181 residues: Ribosome maturation factor RimM (181 aa).

The PRC barrel domain occupies 97-170; that stretch reads AGEFWLPDLM…RIEVVAIPGL (74 aa).

The protein belongs to the RimM family. In terms of assembly, binds ribosomal protein uS19.

Its subcellular location is the cytoplasm. Its function is as follows. An accessory protein needed during the final step in the assembly of 30S ribosomal subunit, possibly for assembly of the head region. Essential for efficient processing of 16S rRNA. May be needed both before and after RbfA during the maturation of 16S rRNA. It has affinity for free ribosomal 30S subunits but not for 70S ribosomes. This is Ribosome maturation factor RimM from Gloeobacter violaceus (strain ATCC 29082 / PCC 7421).